The primary structure comprises 683 residues: E3 ubiquitin-protein ligase WAVH1 (683 aa).

The RING-type; atypical zinc-finger motif lies at 130–176 (CGICLQSVKSGQGTAIFTAECSHTFHFPCVTSRAAANHNRLASCPVC). The 137-residue stretch at 302–438 (DLVAVLDVSG…AHSRIPIHTI (137 aa)) folds into the VWFA domain.

Expressed in root tips and leaf primordia.

It catalyses the reaction S-ubiquitinyl-[E2 ubiquitin-conjugating enzyme]-L-cysteine + [acceptor protein]-L-lysine = [E2 ubiquitin-conjugating enzyme]-L-cysteine + N(6)-ubiquitinyl-[acceptor protein]-L-lysine.. E3 ubiquitin-protein ligase involved in the regulation of root growth. Acts as a positive regulator of root gravitropism. Possesses E3 protein ligase activity in vitro. The chain is E3 ubiquitin-protein ligase WAVH1 from Arabidopsis thaliana (Mouse-ear cress).